Consider the following 554-residue polypeptide: Putative acyl-coenzyme A synthetase (554 aa).

Leu195 to Lys206 is a binding site for AMP.

This sequence belongs to the ATP-dependent AMP-binding enzyme family.

In Emericella nidulans (strain FGSC A4 / ATCC 38163 / CBS 112.46 / NRRL 194 / M139) (Aspergillus nidulans), this protein is Putative acyl-coenzyme A synthetase.